The chain runs to 691 residues: Lipase 2 (691 aa).

An N-terminal signal peptide occupies residues 1-37; the sequence is MLRGQEERKYSIRKYSIGVVSVLAATMFVVSSHEAQA. The segment covering 34–72 has biased composition (polar residues); that stretch reads EAQASEKTPTSNAAAQKETLNQPGEQGNAITSHQMQSGK. The interval 34 to 267 is disordered; that stretch reads EAQASEKTPT…KPTDKNTDNK (234 aa). A propeptide spanning residues 38–296 is cleaved from the precursor; sequence SEKTPTSNAA…ADAKKVRPLK (259 aa). Residues 73–82 are compositionally biased toward basic and acidic residues; that stretch reads QLDDMHKENG. 3 stretches are compositionally biased toward polar residues: residues 83–115, 125–172, and 186–207; these read KSGTVTEGKDTLQSSKHQSTQNSKTIRTQNDNQ, SKQS…QPSI, and PTSTTPPSNDKTAPKSTKAQDA. Basic and acidic residues-rich tracts occupy residues 226-238 and 258-267; these read IDAKQDDTVRQSE and KPTDKNTDNK. Ser413 functions as the Nucleophile in the catalytic mechanism. Gly580 contributes to the Ca(2+) binding site. Catalysis depends on Asp604, which acts as the Charge relay system. Ca(2+) is bound at residue Asp645. His646 acts as the Charge relay system in catalysis. Asp648, Asp653, and Asp656 together coordinate Ca(2+).

It belongs to the AB hydrolase superfamily. Lipase family.

The protein resides in the secreted. The enzyme catalyses a triacylglycerol + H2O = a diacylglycerol + a fatty acid + H(+). This Staphylococcus aureus (strain Mu50 / ATCC 700699) protein is Lipase 2 (lip2).